Reading from the N-terminus, the 545-residue chain is CTP synthase (545 aa).

The tract at residues 1–266 (MKTNYIFVTG…DDYICKRFSL (266 aa)) is amidoligase domain. CTP is bound at residue S14. S14 serves as a coordination point for UTP. Residues 15 to 20 (SLGKGI) and D72 contribute to the ATP site. Mg(2+) is bound by residues D72 and E140. Residues 147 to 149 (DIE), 187 to 192 (KTKPTQ), and K223 contribute to the CTP site. Residues 187-192 (KTKPTQ) and K223 each bind UTP. An ATP-binding site is contributed by 239-241 (KDV). The Glutamine amidotransferase type-1 domain occupies 291–542 (TIGMVGKYVE…VKAAGKYQKG (252 aa)). G352 contributes to the L-glutamine binding site. C379 acts as the Nucleophile; for glutamine hydrolysis in catalysis. Residues 380-383 (LGMQ), E403, and R470 contribute to the L-glutamine site. Residues H515 and E517 contribute to the active site.

The protein belongs to the CTP synthase family. In terms of assembly, homotetramer.

It carries out the reaction UTP + L-glutamine + ATP + H2O = CTP + L-glutamate + ADP + phosphate + 2 H(+). The enzyme catalyses L-glutamine + H2O = L-glutamate + NH4(+). It catalyses the reaction UTP + NH4(+) + ATP = CTP + ADP + phosphate + 2 H(+). The protein operates within pyrimidine metabolism; CTP biosynthesis via de novo pathway; CTP from UDP: step 2/2. Its activity is regulated as follows. Allosterically activated by GTP, when glutamine is the substrate; GTP has no effect on the reaction when ammonia is the substrate. The allosteric effector GTP functions by stabilizing the protein conformation that binds the tetrahedral intermediate(s) formed during glutamine hydrolysis. Inhibited by the product CTP, via allosteric rather than competitive inhibition. Functionally, catalyzes the ATP-dependent amination of UTP to CTP with either L-glutamine or ammonia as the source of nitrogen. Regulates intracellular CTP levels through interactions with the four ribonucleotide triphosphates. In Photorhabdus laumondii subsp. laumondii (strain DSM 15139 / CIP 105565 / TT01) (Photorhabdus luminescens subsp. laumondii), this protein is CTP synthase.